Here is a 321-residue protein sequence, read N- to C-terminus: MSQQNQTEYLDFELPIAELEAKIESLRSVTDQDSKIDLDDEIKRLQKKTAELTKKTFADLDAWQVSRMARHPNRPYTLDYISRIFTEFEELAGDRAFADDKAIVGGLARLDGRPVMVIGHQKGRSVKEKVLRNFGMPAPEGYRKALRLMQMAERFRLPIITFIDTPGAYPGVGAEERGQSEAIARNLREMSTLTVPVICTVIGEGGSGGALAIGVGDKVNMLQYSTYSVISPEGCASILWKSAEKASTAAEVMGLTASRLKELELIDNIVTEPLGGAHRQYDEMAQALKQRILSDLEDLDILDKETLLDRRYQRLMNYGYV.

Residues 37 to 298 (DLDDEIKRLQ…KQRILSDLED (262 aa)) enclose the CoA carboxyltransferase C-terminal domain.

This sequence belongs to the AccA family. Acetyl-CoA carboxylase is a heterohexamer composed of biotin carboxyl carrier protein (AccB), biotin carboxylase (AccC) and two subunits each of ACCase subunit alpha (AccA) and ACCase subunit beta (AccD).

Its subcellular location is the cytoplasm. It catalyses the reaction N(6)-carboxybiotinyl-L-lysyl-[protein] + acetyl-CoA = N(6)-biotinyl-L-lysyl-[protein] + malonyl-CoA. Its pathway is lipid metabolism; malonyl-CoA biosynthesis; malonyl-CoA from acetyl-CoA: step 1/1. Functionally, component of the acetyl coenzyme A carboxylase (ACC) complex. First, biotin carboxylase catalyzes the carboxylation of biotin on its carrier protein (BCCP) and then the CO(2) group is transferred by the carboxyltransferase to acetyl-CoA to form malonyl-CoA. This chain is Acetyl-coenzyme A carboxylase carboxyl transferase subunit alpha, found in Mannheimia succiniciproducens (strain KCTC 0769BP / MBEL55E).